The following is a 99-amino-acid chain: UPF0729 protein CG18508 (99 aa).

The interval Pro60–Ile99 is disordered. Residues Val68–Glu77 are compositionally biased toward acidic residues. At Ser69 the chain carries Phosphoserine.

This sequence belongs to the UPF0729 family.

This chain is UPF0729 protein CG18508, found in Drosophila melanogaster (Fruit fly).